A 662-amino-acid chain; its full sequence is tRNA 5-methylaminomethyl-2-thiouridine biosynthesis bifunctional protein MnmC (662 aa).

The tRNA (mnm(5)s(2)U34)-methyltransferase stretch occupies residues 1–245; it reads MKQNAIQPAN…KREMLTGEMA (245 aa). The segment at 270–662 is FAD-dependent cmnm(5)s(2)U34 oxidoreductase; sequence IGGGIASALL…RKLLKGKAVK (393 aa).

The protein in the N-terminal section; belongs to the methyltransferase superfamily. tRNA (mnm(5)s(2)U34)-methyltransferase family. This sequence in the C-terminal section; belongs to the DAO family. FAD serves as cofactor.

It is found in the cytoplasm. It carries out the reaction 5-aminomethyl-2-thiouridine(34) in tRNA + S-adenosyl-L-methionine = 5-methylaminomethyl-2-thiouridine(34) in tRNA + S-adenosyl-L-homocysteine + H(+). Catalyzes the last two steps in the biosynthesis of 5-methylaminomethyl-2-thiouridine (mnm(5)s(2)U) at the wobble position (U34) in tRNA. Catalyzes the FAD-dependent demodification of cmnm(5)s(2)U34 to nm(5)s(2)U34, followed by the transfer of a methyl group from S-adenosyl-L-methionine to nm(5)s(2)U34, to form mnm(5)s(2)U34. This is tRNA 5-methylaminomethyl-2-thiouridine biosynthesis bifunctional protein MnmC from Klebsiella pneumoniae subsp. pneumoniae (strain ATCC 700721 / MGH 78578).